A 271-amino-acid chain; its full sequence is 3-deoxy-manno-octulosonate cytidylyltransferase (271 aa).

Belongs to the KdsB family.

The protein resides in the cytoplasm. The catalysed reaction is 3-deoxy-alpha-D-manno-oct-2-ulosonate + CTP = CMP-3-deoxy-beta-D-manno-octulosonate + diphosphate. It participates in nucleotide-sugar biosynthesis; CMP-3-deoxy-D-manno-octulosonate biosynthesis; CMP-3-deoxy-D-manno-octulosonate from 3-deoxy-D-manno-octulosonate and CTP: step 1/1. It functions in the pathway bacterial outer membrane biogenesis; lipopolysaccharide biosynthesis. Its function is as follows. Activates KDO (a required 8-carbon sugar) for incorporation into bacterial lipopolysaccharide in Gram-negative bacteria. In Leptothrix cholodnii (strain ATCC 51168 / LMG 8142 / SP-6) (Leptothrix discophora (strain SP-6)), this protein is 3-deoxy-manno-octulosonate cytidylyltransferase.